A 57-amino-acid chain; its full sequence is Large ribosomal subunit protein bL32 (57 aa).

The segment at 1-21 (MAVPKRRTSKKVKNQRRTHKK) is disordered.

The protein belongs to the bacterial ribosomal protein bL32 family.

The sequence is that of Large ribosomal subunit protein bL32 from Oceanobacillus iheyensis (strain DSM 14371 / CIP 107618 / JCM 11309 / KCTC 3954 / HTE831).